Consider the following 339-residue polypeptide: Serpentine receptor class alpha-22 (339 aa).

Helical transmembrane passes span 33 to 53 (IFIS…IQAL), 110 to 130 (VVDL…VFSL), 150 to 170 (FIAI…FYIA), 199 to 219 (VRTM…YLSV), 250 to 270 (IFII…NLLL), and 284 to 304 (IALF…VIYF).

This sequence belongs to the nematode receptor-like protein sra family.

It is found in the membrane. The chain is Serpentine receptor class alpha-22 (sra-22) from Caenorhabditis elegans.